We begin with the raw amino-acid sequence, 258 residues long: Cytosolic Fe-S cluster assembly factor Nubp2 homolog (258 aa).

Gly-14–Ser-21 provides a ligand contact to ATP. The [4Fe-4S] cluster site is built by Cys-188 and Cys-191.

The protein belongs to the Mrp/NBP35 ATP-binding proteins family. NUBP2/CFD1 subfamily. In terms of assembly, heterotetramer of 2 Nubp1 and 2 Nubp2 chains. It depends on [4Fe-4S] cluster as a cofactor.

Its subcellular location is the cytoplasm. Its function is as follows. Component of the cytosolic iron-sulfur (Fe/S) protein assembly (CIA) machinery. Required for maturation of extramitochondrial Fe-S proteins. The Nubp1-Nubp2 heterotetramer forms a Fe-S scaffold complex, mediating the de novo assembly of an Fe-S cluster and its transfer to target apoproteins. This chain is Cytosolic Fe-S cluster assembly factor Nubp2 homolog, found in Drosophila pseudoobscura pseudoobscura (Fruit fly).